Here is a 35-residue protein sequence, read N- to C-terminus: Alpha-amanitin proprotein 1 (35 aa).

Residues 1–10 (MSDINATRLP) constitute a propeptide that is removed on maturation. Ile-11 carries the (3R,4R)-4,5-dihydroxyisoleucine; in form alpha-amanitin modification. Ile-11 bears the (3R,4S)-4-hydroxyisoleucine; in form gamma-amanitin mark. The segment at residues 11–18 (IWGIGCNP) is a cross-link (cyclopeptide (Ile-Pro)). Positions 12 to 16 (WGIGC) form a cross-link, 2'-cysteinyl-6'-hydroxytryptophan sulfoxide (Trp-Cys). Pro-18 carries the 4-hydroxyproline modification. The propeptide occupies 19-35 (CVGDDVTSVLTRGEALC).

The protein belongs to the MSDIN fungal toxin family. Processed by the macrocyclase-peptidase enzyme POPB to yield a toxic cyclic octapeptide. POPB first removes 10 residues from the N-terminus. Conformational trapping of the remaining peptide forces the enzyme to release this intermediate rather than proceed to macrocyclization. The enzyme rebinds the remaining peptide in a different conformation and catalyzes macrocyclization of the N-terminal 8 residues. As to expression, expressed in basidiocarps.

In terms of biological role, major toxin belonging to the bicyclic octapeptides amatoxins that acts by binding non-competitively to RNA polymerase II and greatly slowing the elongation of transcripts from target promoters. In Amanita exitialis (Guangzhou destroying angel), this protein is Alpha-amanitin proprotein 1.